We begin with the raw amino-acid sequence, 224 residues long: tRNA (guanine-N(7)-)-methyltransferase (224 aa).

S-adenosyl-L-methionine contacts are provided by E54, E79, and D129. D129 is a catalytic residue. The substrate site is built by K133 and D165.

The protein belongs to the class I-like SAM-binding methyltransferase superfamily. TrmB family.

It carries out the reaction guanosine(46) in tRNA + S-adenosyl-L-methionine = N(7)-methylguanosine(46) in tRNA + S-adenosyl-L-homocysteine. It functions in the pathway tRNA modification; N(7)-methylguanine-tRNA biosynthesis. Catalyzes the formation of N(7)-methylguanine at position 46 (m7G46) in tRNA. The polypeptide is tRNA (guanine-N(7)-)-methyltransferase (Chlamydia pneumoniae (Chlamydophila pneumoniae)).